A 258-amino-acid polypeptide reads, in one-letter code: Phosphonates import ATP-binding protein PhnC 3 (258 aa).

The 245-residue stretch at 2–246 folds into the ABC transporter domain; sequence IEFKNVSLVY…TFEEIYGRKI (245 aa). Residue 35–42 participates in ATP binding; it reads GLSGAGKS.

The protein belongs to the ABC transporter superfamily. Phosphonates importer (TC 3.A.1.9.1) family. The complex is composed of two ATP-binding proteins (PhnC), two transmembrane proteins (PhnE) and a solute-binding protein (PhnD).

Its subcellular location is the cell membrane. It catalyses the reaction phosphonate(out) + ATP + H2O = phosphonate(in) + ADP + phosphate + H(+). Functionally, part of the ABC transporter complex PhnCDE involved in phosphonates import. Responsible for energy coupling to the transport system. The sequence is that of Phosphonates import ATP-binding protein PhnC 3 from Halalkalibacterium halodurans (strain ATCC BAA-125 / DSM 18197 / FERM 7344 / JCM 9153 / C-125) (Bacillus halodurans).